The chain runs to 637 residues: Phosphomethylpyrimidine synthase (637 aa).

Residues Asn-242, Met-271, Tyr-300, His-336, 356-358 (SRG), 397-400 (DGLR), and Glu-436 contribute to the substrate site. Residue His-440 participates in Zn(2+) binding. Position 463 (Tyr-463) interacts with substrate. Position 504 (His-504) interacts with Zn(2+). Residues Cys-584, Cys-587, and Cys-592 each coordinate [4Fe-4S] cluster.

This sequence belongs to the ThiC family. Homodimer. Requires [4Fe-4S] cluster as cofactor.

It carries out the reaction 5-amino-1-(5-phospho-beta-D-ribosyl)imidazole + S-adenosyl-L-methionine = 4-amino-2-methyl-5-(phosphooxymethyl)pyrimidine + CO + 5'-deoxyadenosine + formate + L-methionine + 3 H(+). It functions in the pathway cofactor biosynthesis; thiamine diphosphate biosynthesis. In terms of biological role, catalyzes the synthesis of the hydroxymethylpyrimidine phosphate (HMP-P) moiety of thiamine from aminoimidazole ribotide (AIR) in a radical S-adenosyl-L-methionine (SAM)-dependent reaction. The polypeptide is Phosphomethylpyrimidine synthase (Bordetella pertussis (strain Tohama I / ATCC BAA-589 / NCTC 13251)).